The sequence spans 640 residues: Threonine--tRNA ligase (640 aa).

Residues 1–60 enclose the TGS domain; it reads MKITFPDGAVKEFEPGVSTADIAASISPGLKKKALAGKLNGELLDLVTPIHEDGAIEIVT. Residues 241-538 are catalytic; the sequence is DHRKLGKELD…LIEEYKGAFP (298 aa). The Zn(2+) site is built by cysteine 334, histidine 385, and histidine 515.

The protein belongs to the class-II aminoacyl-tRNA synthetase family. Homodimer. The cofactor is Zn(2+).

The protein resides in the cytoplasm. It catalyses the reaction tRNA(Thr) + L-threonine + ATP = L-threonyl-tRNA(Thr) + AMP + diphosphate + H(+). Its function is as follows. Catalyzes the attachment of threonine to tRNA(Thr) in a two-step reaction: L-threonine is first activated by ATP to form Thr-AMP and then transferred to the acceptor end of tRNA(Thr). Also edits incorrectly charged L-seryl-tRNA(Thr). The sequence is that of Threonine--tRNA ligase from Listeria monocytogenes serotype 4b (strain CLIP80459).